The chain runs to 83 residues: MKTLLLTLVVVTMVCLDLGYTRRCFNQQSSQPKTTKSCPPGENSCYNKQWRDHRGSITERGCGCPKVKPGIKLRCCESEDCNN.

The N-terminal stretch at 1 to 21 is a signal peptide; that stretch reads MKTLLLTLVVVTMVCLDLGYT. Intrachain disulfides connect Cys24–Cys45, Cys38–Cys62, Cys64–Cys75, and Cys76–Cys81.

The protein belongs to the three-finger toxin family. Short-chain subfamily. Type I alpha-neurotoxin sub-subfamily. As to expression, expressed by the venom gland.

The protein localises to the secreted. Its function is as follows. Binds to muscle nicotinic acetylcholine receptor (nAChR) and inhibit acetylcholine from binding to the receptor, thereby impairing neuromuscular transmission. The chain is Short neurotoxin D from Laticauda colubrina (Yellow-lipped sea krait).